The following is a 429-amino-acid chain: U3 small nucleolar RNA-associated protein 18 homolog (429 aa).

WD repeat units lie at residues 117–156, 295–336, 345–386, and 392–428; these read RYTRGITVVKFHKTRPVLIVADQGGNVQLFKVSREVKKDR, TDDG…NSTN, NLVT…TFKN, and GKVTHARCVEFSPNGGYMAVGNDDGRLHVFEIHHFTD.

It belongs to the WD repeat UTP18 family.

It localises to the nucleus. The protein localises to the nucleolus. In terms of biological role, involved in nucleolar processing of pre-18S ribosomal RNA. This Caenorhabditis elegans protein is U3 small nucleolar RNA-associated protein 18 homolog.